Consider the following 554-residue polypeptide: Kinesin-like protein 3 (554 aa).

A Kinesin motor domain is found at 3-325 (SIKVVCRIRP…LRFGHRAKSI (323 aa)). ATP is bound by residues 84-91 (GQTGSGKT) and 233-240 (GSESVGKS). Positions 446 to 473 (LSSTKQQLSDLMTALGDAQERYVELVKN) form a coiled coil.

Belongs to the TRAFAC class myosin-kinesin ATPase superfamily. Kinesin family.

The protein resides in the cytoplasm. The protein localises to the cytoskeleton. In terms of biological role, cytoplasmic motor that could play a role in Golgi membrane recycling. This is Kinesin-like protein 3 (klp3) from Schizosaccharomyces pombe (strain 972 / ATCC 24843) (Fission yeast).